Reading from the N-terminus, the 131-residue chain is uncharacterized protein (131 aa).

Residues 8-124 (DILVVDDDPD…ELIRLVQQYC (117 aa)) enclose the Response regulatory domain. A 4-aspartylphosphate modification is found at D57.

This is an uncharacterized protein from Leptolyngbya boryana (Plectonema boryanum).